Consider the following 392-residue polypeptide: HORMA domain-containing protein 1 (392 aa).

Residues 25-227 (QQSLMFVKRL…TPFHTFRLKV (203 aa)) enclose the HORMA domain. Disordered stretches follow at residues 271–292 (IKTKMNEQNENSGTSEIKEPNL) and 371–392 (LESSSQESVLKRRRVSEPNEHT). Serine 374 is modified (phosphoserine). A Nuclear localization signal motif is present at residues 381-384 (KRRR).

Interacts with HORMAD2. Interacts with IHO1. Phosphorylated at Ser-375 in a SPO11-dependent manner.

The protein resides in the nucleus. It is found in the chromosome. Its function is as follows. Plays a key role in meiotic progression. Regulates 3 different functions during meiosis: ensures that sufficient numbers of processed DNA double-strand breaks (DSBs) are available for successful homology search by increasing the steady-state numbers of single-stranded DSB ends. Promotes synaptonemal-complex formation independently of its role in homology search. Plays a key role in the male mid-pachytene checkpoint and the female meiotic prophase checkpoint: required for efficient build-up of ATR activity on unsynapsed chromosome regions, a process believed to form the basis of meiotic silencing of unsynapsed chromatin (MSUC) and meiotic prophase quality control in both sexes. This is HORMA domain-containing protein 1 (Hormad1) from Rattus norvegicus (Rat).